A 24-amino-acid chain; its full sequence is Sperm protamine P3 (24 aa).

Positions 1–24 (RRRRRRRRHRRRRGRRGRRSRGRR) are disordered.

Testis.

It localises to the nucleus. It is found in the chromosome. Its function is as follows. Protamines substitute for histones in the chromatin of sperm during the haploid phase of spermatogenesis. They compact sperm DNA into a highly condensed, stable and inactive complex. The sequence is that of Sperm protamine P3 from Octopus vulgaris (Common octopus).